The primary structure comprises 421 residues: Histidine--tRNA ligase (421 aa).

The protein belongs to the class-II aminoacyl-tRNA synthetase family. As to quaternary structure, homodimer.

Its subcellular location is the cytoplasm. The catalysed reaction is tRNA(His) + L-histidine + ATP = L-histidyl-tRNA(His) + AMP + diphosphate + H(+). This Coxiella burnetii (strain CbuK_Q154) (Coxiella burnetii (strain Q154)) protein is Histidine--tRNA ligase.